The sequence spans 659 residues: Pollen receptor-like kinase 6 (659 aa).

The signal sequence occupies residues 1-26; the sequence is MAAAVLNPGFFLLILLLSFSISPSLQ. At 27–266 the chain is on the extracellular side; sequence YVSESEPLVR…SVPETSNKAA (240 aa). An intrachain disulfide couples C58 to C67. LRR repeat units lie at residues 95–118, 120–142, 143–167, 168–190, and 192–214; these read LPNLKTIRLDNNLLSGPLPHFFKL, GLKSLMLSNNSFSGEIRDDFFKD, MSKLKRLFLDHNKFEGSIPSSITQL, PQLEELHMQSNNLTGEIPPEFGS, and KNLKVLDLSTNSLDGIVPQSIAD. A glycan (N-linked (GlcNAc...) asparagine) is linked at N128. Residue N179 is glycosylated (N-linked (GlcNAc...) asparagine). A glycan (N-linked (GlcNAc...) asparagine) is linked at N221. The tract at residues 226–242 is LURE peptides binding; the sequence is EYLCGPVVDVGCENIEL. C229 and C237 are oxidised to a cystine. A disordered region spans residues 241–260; that stretch reads ELNDPQEGQPPSKPSSSVPE. Residues 267 to 287 form a helical membrane-spanning segment; it reads INAIMVSISLLLLFFIIVGVI. The Cytoplasmic segment spans residues 288-659; it reads KRRNKKKNPD…AVRRIEQVKT (372 aa). Residues 312–354 are disordered; it reads VRISESSSTTAKRSTDSSRKRGGHSDDGSTKKGVSNIGKGGNG. Over residues 324–341 the composition is skewed to basic and acidic residues; that stretch reads RSTDSSRKRGGHSDDGST. Positions 384–659 constitute a Protein kinase domain; sequence KAAAEVLGNG…AVRRIEQVKT (276 aa). ATP contacts are provided by residues 390–398 and K412; that span reads LGNGSLGSA. Position 464 is a phosphoserine (S464). A phosphothreonine mark is found at T484 and T557. S561 is modified (phosphoserine).

Belongs to the protein kinase superfamily. Ser/Thr protein kinase family. Interacts with ROPGEF8, ROPGEF9, ROPGEF12, ROPGEF13, PRK3, LIP1 and LIP2. Binds to LURE peptides via its LRR repeats; interacts with LURE1.1, LURE1.2, LURE1.3 and LURE1.4. In terms of tissue distribution, expressed specifically in the pollen tube, predominantly at the tip.

It is found in the cell membrane. The protein localises to the cytoplasmic granule. In terms of biological role, key receptor for sensing species-specific attractants in cooperation with other pollen receptor-like kinases. Essential for pollen tube reorientation toward attractant peptides. This chain is Pollen receptor-like kinase 6, found in Arabidopsis thaliana (Mouse-ear cress).